A 4015-amino-acid polypeptide reads, in one-letter code: Hybrid PKS-NRPS synthetase iccA (4015 aa).

Residues 1–12 (MAANDSNNQTKP) are compositionally biased toward polar residues. Residues 1 to 20 (MAANDSNNQTKPQLPEEPVA) are disordered. The Ketosynthase family 3 (KS3) domain maps to 16 to 445 (EEPVAIVGSS…GTNAHVIIES (430 aa)). Catalysis depends on for beta-ketoacyl synthase activity residues C190, H327, and H365. The malonyl-CoA:ACP transacylase (MAT) domain stretch occupies residues 560–885 (VFTGQGAQWP…LKRGASDVEA (326 aa)). The segment at 954 to 1091 (HELLGRRTPD…GRLSVHLGEA (138 aa)) is N-terminal hotdog fold. The segment at 954–1260 (HELLGRRTPD…TTKMVGEQDA (307 aa)) is dehydratase (DH) domain. Positions 954 to 1261 (HELLGRRTPD…TKMVGEQDAS (308 aa)) constitute a PKS/mFAS DH domain. H986 acts as the Proton acceptor; for dehydratase activity in catalysis. Residues 1106–1261 (LVNINTDRAY…TKMVGEQDAS (156 aa)) form a C-terminal hotdog fold region. D1165 acts as the Proton donor; for dehydratase activity in catalysis. The interval 1400–1598 (KDDMLNRFYM…YSGADMVVHD (199 aa)) is methyltransferase (MT) domain. A ketoreductase (KR) domain region spans residues 2120–2261 (KTYLMVGAAG…STATTIGNIG (142 aa)). The interval 2379–2405 (STLQNDSSQTGGTGNGSSVRRQVEEAQ) is disordered. The Carrier 1 domain occupies 2409-2488 (EAVDAVLDGF…QICTTAAKKV (80 aa)). O-(pantetheine 4'-phosphoryl)serine is present on S2448. Residues 2498–2515 (EDAVAEEGGREAASKKEP) show a composition bias toward basic and acidic residues. 2 disordered regions span residues 2498-2529 (EDAV…PVAP) and 2545-2597 (TISE…VRDE). Residues 2553–2569 (SAFSNKGSSSSATGASS) are compositionally biased toward low complexity. A compositionally biased stretch (basic and acidic residues) spans 2582–2597 (TSKDQSHVRPETVRDE). Residues 2598 to 3029 (RMSPAQARIW…HVKLKDCVIH (432 aa)) form a condensation (C) domain region. Positions 3063–3459 (LKSPKNAAIQ…GTLLCLGRLD (397 aa)) are adenylation (A) (KR) domain. Residues 3063-3459 (LKSPKNAAIQ…GTLLCLGRLD (397 aa)) form a reductase (RED) domain region. The 80-residue stretch at 3572 to 3651 (EKMNIREGEL…EMALCVDEQR (80 aa)) folds into the Carrier 2 domain. S3611 bears the O-(pantetheine 4'-phosphoryl)serine mark.

This sequence in the C-terminal section; belongs to the NRP synthetase family.

It carries out the reaction L-tyrosine + holo-[ACP] + 7 malonyl-CoA + acetyl-CoA + 8 AH2 + 2 S-adenosyl-L-methionine + ATP + 4 H(+) = N-[(4E,6E,10S,12Z,14E)-6,10-dimethyl-3-oxohexadeca-4,6,12,14-tetraenoyl]-L-tyrosyl-[ACP] + 8 A + AMP + 2 S-adenosyl-L-homocysteine + 7 CO2 + diphosphate + 8 CoA + 6 H2O. It participates in mycotoxin biosynthesis. Functionally, hybrid PKS-NRPS synthetase; part of the gene cluster that mediates the biosynthesis of ilicicolin H, a 4-hydroxy-2-pyridonealkaloid that has potent and broad antifungal activities by inhibiting the mitochondrial respiration chain. IccA assembles the backbone of ilicicolin H. The PKS portion and trans-acting enoyl reductase iccB work together to construct an octaketide, and two methyl groups are introduced by the MT domain during the chain assembly. The nascent chain is then condensed with tyrosine, catalyzed by the C domain, and the resulting PKS-NRPS hybrid is offloaded by the RED domain to form an advanced tetramic acid intermediate. The biosynthesis of ilicicolin H starts with formation of the tetramic acid by the hybrid PKS-NRPS synthetase iccA with the partnering trans-enoyl reductase iccB since iccA lacks a designated enoylreductase (ER) domain. The cytochrome P450 monooxygenase iccC then catalyzes the ring expansion of the tetramate to the acyclic 2-pyridone. The pericyclase iccD further converts the acyclic 2-pyridone into 8-epi-ilicicolin H. Finally, the epimerase iccE converts 8-epi-ilicicolin H into ilicicolin H via epimerization. IccA to iccE are sufficient for ilicicolin H biosynthesis and the roles of the remaining enzymes, iccF, iccG and iccH within the pathway have still to be determined. The chain is Hybrid PKS-NRPS synthetase iccA from Talaromyces variabilis (Penicillium variabile).